We begin with the raw amino-acid sequence, 89 residues long: Small ribosomal subunit protein uS15 (89 aa).

It belongs to the universal ribosomal protein uS15 family. In terms of assembly, part of the 30S ribosomal subunit. Forms a bridge to the 50S subunit in the 70S ribosome, contacting the 23S rRNA.

One of the primary rRNA binding proteins, it binds directly to 16S rRNA where it helps nucleate assembly of the platform of the 30S subunit by binding and bridging several RNA helices of the 16S rRNA. In terms of biological role, forms an intersubunit bridge (bridge B4) with the 23S rRNA of the 50S subunit in the ribosome. This Trichormus variabilis (strain ATCC 29413 / PCC 7937) (Anabaena variabilis) protein is Small ribosomal subunit protein uS15.